The following is a 488-amino-acid chain: Acetyl-CoA decarbonylase/synthase complex subunit gamma (488 aa).

Residues 1-61 (MPKKISAMDI…FEKNKKKIIE (61 aa)) enclose the 4Fe-4S domain. Residues Cys19, Cys22, Cys27, and Cys44 each contribute to the [4Fe-4S] cluster site.

In terms of assembly, heterodimer of delta and gamma chains. The ACDS complex is made up of alpha, epsilon, beta, gamma and delta chains with a probable stoichiometry of (alpha(2)epsilon(2))(4)-beta(8)-(gamma(1)delta(1))(8). Corrinoid serves as cofactor. It depends on [4Fe-4S] cluster as a cofactor.

The catalysed reaction is 5,6,7,8-tetrahydrosarcinapterin + methyl-Co(III)-[corrinoid Fe-S protein] = 5-methyltetrahydrosarcinapterin + Co(I)-[corrinoid Fe-S protein] + H(+). In terms of biological role, part of a complex that catalyzes the reversible cleavage of acetyl-CoA, allowing autotrophic growth from CO(2). The sequence is that of Acetyl-CoA decarbonylase/synthase complex subunit gamma from Methanocaldococcus jannaschii (strain ATCC 43067 / DSM 2661 / JAL-1 / JCM 10045 / NBRC 100440) (Methanococcus jannaschii).